The primary structure comprises 931 residues: Isoleucine--tRNA ligase (931 aa).

Residues 57 to 67 (PFANGNIHMGH) carry the 'HIGH' region motif. Glu-556 is an L-isoleucyl-5'-AMP binding site. Positions 597–601 (KMSKS) match the 'KMSKS' region motif. Residue Lys-600 coordinates ATP. Zn(2+)-binding residues include Cys-890, Cys-893, Cys-910, and Cys-913.

This sequence belongs to the class-I aminoacyl-tRNA synthetase family. IleS type 1 subfamily. Monomer. Zn(2+) serves as cofactor.

The protein resides in the cytoplasm. It catalyses the reaction tRNA(Ile) + L-isoleucine + ATP = L-isoleucyl-tRNA(Ile) + AMP + diphosphate. Catalyzes the attachment of isoleucine to tRNA(Ile). As IleRS can inadvertently accommodate and process structurally similar amino acids such as valine, to avoid such errors it has two additional distinct tRNA(Ile)-dependent editing activities. One activity is designated as 'pretransfer' editing and involves the hydrolysis of activated Val-AMP. The other activity is designated 'posttransfer' editing and involves deacylation of mischarged Val-tRNA(Ile). The chain is Isoleucine--tRNA ligase from Lactobacillus delbrueckii subsp. bulgaricus (strain ATCC BAA-365 / Lb-18).